Consider the following 1503-residue polypeptide: Protein Skeletor, isoforms D/E (1503 aa).

The signal sequence occupies residues 1–28 (MLAMKDKPWLLLFGLLAALSCLASFGDA). DM13 domains follow at residues 34–143 (GTKI…VSIP) and 151–258 (PQKI…VRLP). One can recognise a DOMON domain in the interval 287 to 419 (LAFEVRWAVA…GAESVVWAIG (133 aa)). 4 disordered regions span residues 451 to 491 (PLPE…NVEP), 830 to 857 (NPNL…PTEI), 1086 to 1106 (IFNQ…SSVS), and 1426 to 1503 (EFRG…GRRA). The segment covering 830–840 (NPNLNPNHPNQ) has biased composition (low complexity). Positions 1452 to 1491 (SSSSGSTIYPYSSSTGASTSTVSSSASSPLSSSSLRPIST) are enriched in low complexity.

In terms of assembly, interacts with Chro and Mgtor as part of a macromolecular complex forming the spindle matrix. Chro colocalizes with Skeletor (Skel) on the chromosomes at interphase and on spindle during metaphase.

Its subcellular location is the cytoplasm. The protein resides in the cytoskeleton. It is found in the spindle. It localises to the nucleus. The protein localises to the nucleolus. Its subcellular location is the chromosome. Functionally, provides structural support to stabilize and organize the microtubule spindle during mitosis (within embryonic somatic cells) and meiosis (within spermatocytes). The role in mitosis regulation depends on the Ran pathway. The sequence is that of Protein Skeletor, isoforms D/E from Drosophila melanogaster (Fruit fly).